We begin with the raw amino-acid sequence, 323 residues long: Ankyrin repeat and SOCS box protein 11 (323 aa).

6 ANK repeats span residues 64–93 (ADRS…NVNL), 97–126 (NRVS…HVNG), 130–159 (HGAT…KAQL), 162–191 (HLAS…NIDQ), 195–224 (HLGT…NVNH), and 227–256 (WLDT…NLKC). Residues 273–323 (SVEQALLLREGPPALSQLCRLCVRKCLGRNCHKTIHKLYLPDPLEKFLLYQ) form the SOCS box domain.

Belongs to the ankyrin SOCS box (ASB) family. As to quaternary structure, substrate-recognition component of the ECS(ASB11) complex, composed of ASB11, CUL5, ELOB, ELOC and RNF7/RBX2.

The protein localises to the endoplasmic reticulum. Its pathway is protein modification; protein ubiquitination. Substrate-recognition component of a cullin-5-RING E3 ubiquitin-protein ligase complex (ECS complex, also named CRL5 complex), which mediates the ubiquitination and subsequent proteasomal degradation of target proteins, such as BIK, DIRAS2 and RPN1. The ECS(ASB11) complex acts as a regulator of the endoplasmic reticulum unfolded protein response by mediating ubiquitination and degradation of BIK. The sequence is that of Ankyrin repeat and SOCS box protein 11 (ASB11) from Bos taurus (Bovine).